Consider the following 157-residue polypeptide: MRIIGIDPGLARVGYGIIEIENERKILLDCGVIETGKDKKEEDRLYEIFQDLNELINHWNPTSAAVEKFFFYRSSTTISVVQARGVIMMVLASKKINVSEYSPAQIKLTIAGSGKASKKDILDAVMYNLDLNKPPKPDDSADALAIALTKLNEDGFN.

Catalysis depends on residues D7, E67, and D139. Mg(2+)-binding residues include D7, E67, and D139.

This sequence belongs to the RuvC family. As to quaternary structure, homodimer which binds Holliday junction (HJ) DNA. The HJ becomes 2-fold symmetrical on binding to RuvC with unstacked arms; it has a different conformation from HJ DNA in complex with RuvA. In the full resolvosome a probable DNA-RuvA(4)-RuvB(12)-RuvC(2) complex forms which resolves the HJ. Mg(2+) serves as cofactor.

The protein localises to the cytoplasm. It catalyses the reaction Endonucleolytic cleavage at a junction such as a reciprocal single-stranded crossover between two homologous DNA duplexes (Holliday junction).. Its function is as follows. The RuvA-RuvB-RuvC complex processes Holliday junction (HJ) DNA during genetic recombination and DNA repair. Endonuclease that resolves HJ intermediates. Cleaves cruciform DNA by making single-stranded nicks across the HJ at symmetrical positions within the homologous arms, yielding a 5'-phosphate and a 3'-hydroxyl group; requires a central core of homology in the junction. The consensus cleavage sequence is 5'-(A/T)TT(C/G)-3'. Cleavage occurs on the 3'-side of the TT dinucleotide at the point of strand exchange. HJ branch migration catalyzed by RuvA-RuvB allows RuvC to scan DNA until it finds its consensus sequence, where it cleaves and resolves the cruciform DNA. This Prochlorococcus marinus (strain MIT 9301) protein is Crossover junction endodeoxyribonuclease RuvC.